We begin with the raw amino-acid sequence, 96 residues long: MPRPRKCRRLSACVPCSMFKPNGIPSVELTKIQLEADEFEALNLGDVEKMSQLDAAARMGISRQTFGNLLASARKKVATAITRGHALVLPQERQES.

This sequence belongs to the UPF0251 family.

This Shewanella sediminis (strain HAW-EB3) protein is UPF0251 protein Ssed_3913.